The chain runs to 25 residues: Galactose-binding lectin-2 (25 aa).

As to quaternary structure, homodimer. In terms of processing, N-glycosylated.

Functionally, D-galactose specific lectin. Binds in decreasing order of affinity: melibiose, N-acetyllactosamine, D-galacturonic acid, D-galactose, methyl-alpha-D-galactoside, D-galactose, methyl-alpha-D-galactopyranoside, methyl-beta-D-galactopyranoside and lactose. Binds also the glycoproteins globotriose, asialofetuin and mucin. Possesses glycan-dependent cytotoxic activity against Burkitt's lymphoma Raji cells and erythroleukemia K562 cells. Has calcium-independent hemagglutinating activity towards human erythrocytes. This chain is Galactose-binding lectin-2, found in Aplysia kurodai (Kuroda's sea hare).